A 418-amino-acid chain; its full sequence is Light-independent protochlorophyllide reductase subunit N (418 aa).

Residues C17, C42, and C103 each coordinate [4Fe-4S] cluster.

The protein belongs to the BchN/ChlN family. As to quaternary structure, protochlorophyllide reductase is composed of three subunits; ChlL, ChlN and ChlB. Forms a heterotetramer of two ChlB and two ChlN subunits. [4Fe-4S] cluster is required as a cofactor.

The catalysed reaction is chlorophyllide a + oxidized 2[4Fe-4S]-[ferredoxin] + 2 ADP + 2 phosphate = protochlorophyllide a + reduced 2[4Fe-4S]-[ferredoxin] + 2 ATP + 2 H2O. The protein operates within porphyrin-containing compound metabolism; chlorophyll biosynthesis (light-independent). Its function is as follows. Component of the dark-operative protochlorophyllide reductase (DPOR) that uses Mg-ATP and reduced ferredoxin to reduce ring D of protochlorophyllide (Pchlide) to form chlorophyllide a (Chlide). This reaction is light-independent. The NB-protein (ChlN-ChlB) is the catalytic component of the complex. This is Light-independent protochlorophyllide reductase subunit N from Prochlorococcus marinus (strain AS9601).